The sequence spans 231 residues: Large ribosomal subunit protein uL1 (231 aa).

Belongs to the universal ribosomal protein uL1 family. As to quaternary structure, part of the 50S ribosomal subunit.

Functionally, binds directly to 23S rRNA. The L1 stalk is quite mobile in the ribosome, and is involved in E site tRNA release. In terms of biological role, protein L1 is also a translational repressor protein, it controls the translation of the L11 operon by binding to its mRNA. This chain is Large ribosomal subunit protein uL1, found in Acinetobacter baumannii (strain AB307-0294).